Here is a 218-residue protein sequence, read N- to C-terminus: uncharacterized protein (218 aa).

His-57, His-59, Asp-61, His-62, His-138, Asp-158, and His-199 together coordinate Zn(2+).

This sequence belongs to the metallo-beta-lactamase superfamily. Glyoxalase II family. Zn(2+) is required as a cofactor.

This is an uncharacterized protein from Mycobacterium leprae (strain TN).